Reading from the N-terminus, the 1512-residue chain is Bifunctional glutamate/proline--tRNA ligase (1512 aa).

A glutamate--tRNA ligase region spans residues 164–759; that stretch reads GTKWDVSGNR…SSVLYSRVAV (596 aa). A 'HIGH' region motif is present at residues 204-214; the sequence is PEASGYLHIGH. The tract at residues 294 to 315 is disordered; it reads TPAEQMKAEREQRTESKHRKNS. The span at 299-308 shows a compositional bias: basic and acidic residues; that stretch reads MKAEREQRTE. N6-acetyllysine; alternate is present on Lys-300. N6-malonyllysine; alternate is present on Lys-300. A Phosphothreonine modification is found at Thr-355. Lys-417 carries the N6-acetyllysine modification. Residues 432–436 carry the 'KMSKS' region motif; the sequence is VLSKR. Ser-434 carries the post-translational modification Phosphoserine. An N6-acetyllysine mark is found at Lys-498, Lys-535, Lys-542, and Lys-637. The span at 709-736 shows a compositional bias: basic and acidic residues; it reads EMPTSGSKEKTKVEISKKETSSAPKERP. The interval 709-742 is disordered; that stretch reads EMPTSGSKEKTKVEISKKETSSAPKERPAPAVSS. A WHEP-TRS 1 domain is found at 749–805; it reads DSSVLYSRVAVQGDVVRELKAKKAPKEDIDAAVKQLLTLKAEYKEKTGQEYKPGNPS. Positions 760 to 956 are 3 X 57 AA approximate repeats; that stretch reads QGDVVRELKA…GIEYKPVSAT (197 aa). Position 788 is an N6-acetyllysine (Lys-788). Positions 795–819 are disordered; that stretch reads TGQEYKPGNPSAAAVQTVSTKSSSN. The span at 808–819 shows a compositional bias: polar residues; it reads AVQTVSTKSSSN. The region spanning 822–878 is the WHEP-TRS 2 domain; the sequence is ESTSLYNKVAAQGEVVRKLKAEKAPKAKVTEAVECLLSLKAEYKEKTGKDYVPGQPP. The residue at position 861 (Lys-861) is an N6-acetyllysine. 2 disordered regions span residues 869 to 898 and 956 to 1011; these read GKDYVPGQPPASQNSHSNPVSNAQPAGAEK and TGAE…PKKQ. Tyr-872 bears the Phosphotyrosine mark. The span at 878-892 shows a compositional bias: polar residues; the sequence is PASQNSHSNPVSNAQ. Ser-885 is modified (phosphoserine). The region spanning 900-956 is the WHEP-TRS 3 domain; it reads EAKVLFDRVACQGEVVRKLKAEKASKDQVDSAVQELLQLKAQYKSLTGIEYKPVSAT. Over residues 958-976 the composition is skewed to basic and acidic residues; sequence AEDKDKKKKEKENKSEKQN. A compositionally biased stretch (gly residues) spans 997–1006; sequence LSSGGAGEGQ. Position 998 is a phosphoserine (Ser-998). Position 999 is a phosphoserine; by RPS6KB1 (Ser-999). The tract at residues 1007–1512 is proline--tRNA ligase; sequence GPKKQTRLGL…KFYTLFGRSY (506 aa). L-proline is bound by residues 1121 to 1123 and Arg-1152; that span reads TSE. ATP is bound by residues Arg-1152, Glu-1154, Arg-1163, Thr-1164, Gln-1237, and Thr-1240. Residue Arg-1152 is modified to Omega-N-methylarginine. Gln-1237 provides a ligand contact to Mg(2+). His-1242 is an L-proline binding site. Residues Thr-1276 and Arg-1278 each contribute to the ATP site. Ser-1350 carries the phosphoserine modification. 4 residues coordinate Zn(2+): Cys-1448, Cys-1453, Cys-1495, and Cys-1497. At Lys-1503 the chain carries N6-acetyllysine.

It in the N-terminal section; belongs to the class-I aminoacyl-tRNA synthetase family. Glutamate--tRNA ligase type 2 subfamily. This sequence in the C-terminal section; belongs to the class-II aminoacyl-tRNA synthetase family. In terms of assembly, homodimer. Part of the aminoacyl-tRNA synthetase multienzyme complex, also know as multisynthetase complex, that is composed of the tRNA ligases for Arg (RARS1), Asp (DARS1), Gln (QARS1), Ile (IARS1), Leu (LARS1), Lys (KARS1), Met (MARS1) the bifunctional ligase for Glu and Pro (EPRS1) and the auxiliary subunits AIMP1/p43, AIMP2/p38 and EEF1E1/p18. Forms a linear complex that contains MARS1, EEF1E1, EPRS1 and AIMP2 that is at the core of the multisubunit complex. Interacts with TARS3. Interacts with DUS2L. Component of the GAIT complex which is composed of EPRS1, RPL13A and GAPDH. Interacts (phosphorylated at Ser-999) with SLC27A1; mediates the translocation of SLC27A1 from the cytoplasm to the plasma membrane thereby increasing the uptake of long-chain fatty acids. Phosphorylated at Ser-999 by RPS6KB1; triggers EPRS1 release from the aminoacyl-tRNA synthetase multienzyme complex. In monocytes, the IFN-gamma-induced phosphorylation at Ser-999 releases EPRS1 from the aminoacyl-tRNA synthetase multienzyme complex, allowing its association with the GAIT complex. Phosphorylation at Ser-999 is specifically required for the RPL13A-mediated interaction of the GAIT complex with eIF4G. Phosphorylation at Ser-999 by RPS6KB1, is also induced by insulin through activation of the mTORC1 signaling pathway and promotes the interaction of EPRS1 with SLC27A1.

It localises to the cytoplasm. The protein localises to the cytosol. It is found in the membrane. It carries out the reaction tRNA(Glu) + L-glutamate + ATP = L-glutamyl-tRNA(Glu) + AMP + diphosphate. The enzyme catalyses tRNA(Pro) + L-proline + ATP = L-prolyl-tRNA(Pro) + AMP + diphosphate. Multifunctional protein which primarily functions within the aminoacyl-tRNA synthetase multienzyme complex, also known as multisynthetase complex. Within the complex it catalyzes the attachment of both L-glutamate and L-proline to their cognate tRNAs in a two-step reaction where the amino acid is first activated by ATP to form a covalent intermediate with AMP. Subsequently, the activated amino acid is transferred to the acceptor end of the cognate tRNA to form L-glutamyl-tRNA(Glu) and L-prolyl-tRNA(Pro). Upon interferon-gamma stimulation, EPRS1 undergoes phosphorylation, causing its dissociation from the aminoacyl-tRNA synthetase multienzyme complex. It is recruited to form the GAIT complex, which binds to stem loop-containing GAIT elements found in the 3'-UTR of various inflammatory mRNAs, such as ceruloplasmin. The GAIT complex inhibits the translation of these mRNAs, allowing interferon-gamma to redirect the function of EPRS1 from protein synthesis to translation inhibition in specific cell contexts. Furthermore, it can function as a downstream effector in the mTORC1 signaling pathway, by promoting the translocation of SLC27A1 from the cytoplasm to the plasma membrane where it mediates the uptake of long-chain fatty acid by adipocytes. Thereby, EPRS1 also plays a role in fat metabolism and more indirectly influences lifespan. The chain is Bifunctional glutamate/proline--tRNA ligase from Mus musculus (Mouse).